We begin with the raw amino-acid sequence, 349 residues long: GTPase Obg (349 aa).

The 159-residue stretch at 1 to 159 (MKFLDEAKVY…RWIWLRLKLI (159 aa)) folds into the Obg domain. The region spanning 160 to 327 (ADAGLVGLPN…ALRALVEVIG (168 aa)) is the OBG-type G domain. Residues 166-173 (GLPNAGKS), 191-195 (FTTLH), 212-215 (DIPG), 279-282 (NKID), and 308-310 (SGV) each bind GTP. Positions 173 and 193 each coordinate Mg(2+).

This sequence belongs to the TRAFAC class OBG-HflX-like GTPase superfamily. OBG GTPase family. As to quaternary structure, monomer. Mg(2+) is required as a cofactor.

Its subcellular location is the cytoplasm. In terms of biological role, an essential GTPase which binds GTP, GDP and possibly (p)ppGpp with moderate affinity, with high nucleotide exchange rates and a fairly low GTP hydrolysis rate. Plays a role in control of the cell cycle, stress response, ribosome biogenesis and in those bacteria that undergo differentiation, in morphogenesis control. In Rhodopseudomonas palustris (strain BisB18), this protein is GTPase Obg.